The following is a 230-amino-acid chain: Ribonuclease 3 (230 aa).

Positions 5–125 (YSRFYNILGY…VIGAIYLDSD (121 aa)) constitute an RNase III domain. Residue Glu40 participates in Mg(2+) binding. The active site involves Asp44. Mg(2+) contacts are provided by Asp111 and Glu114. Glu114 is a catalytic residue. The region spanning 153 to 223 (DSKSKLQEIL…AEKMIEMLSQ (71 aa)) is the DRBM domain.

This sequence belongs to the ribonuclease III family. In terms of assembly, homodimer. Mg(2+) serves as cofactor.

The protein resides in the cytoplasm. It carries out the reaction Endonucleolytic cleavage to 5'-phosphomonoester.. In terms of biological role, digests double-stranded RNA. Involved in the processing of primary rRNA transcript to yield the immediate precursors to the large and small rRNAs (23S and 16S). Processes some mRNAs, and tRNAs when they are encoded in the rRNA operon. Processes pre-crRNA and tracrRNA of type II CRISPR loci if present in the organism. In Francisella tularensis subsp. holarctica (strain OSU18), this protein is Ribonuclease 3.